A 413-amino-acid polypeptide reads, in one-letter code: MAPPSVFSEVPQAQPVLVFKLTADFREDPDPRKVNLGVGAYRTDDCHPWVLPVVKKVEQKIANDNSLNHEYLPILGLAEFRSCASRLALGDDSPALKEKRVGGVQSLGGTGALRIGADFLARWYNGTNNKNTPVYVSSPTWENHNAVFSAAGFKDIRSYRYWDAEKRGLDLQGFLNDLENAPEFSIIVLHACAHNPTGTDPTPEQWKQIASVMKHRFLFPFFDSAYQGFASGNLERDAWAIRYFVSEGFEFFCAQSFSKNFGLYNERVGNLTVVGKEPESILRVLSQMEKIVRITWSNPPAQGARIVADTLSNPELFEEWKGNVKTMADRILTMRSELRARLEALKTPGTWNHITDQIGMFSYTGLNPKQVEYLINEKHIYLLPSGRINVSGLTTKNLDYVATSIHEAITKIQ.

The L-aspartate site is built by G39 and W141. At S149 the chain carries Phosphoserine. Position 195 (N195) interacts with L-aspartate. K259 bears the N6-(pyridoxal phosphate)lysine mark. Residue R387 coordinates L-aspartate.

This sequence belongs to the class-I pyridoxal-phosphate-dependent aminotransferase family. As to quaternary structure, homodimer. Pyridoxal 5'-phosphate is required as a cofactor.

The protein localises to the cytoplasm. It carries out the reaction L-aspartate + 2-oxoglutarate = oxaloacetate + L-glutamate. It catalyses the reaction L-cysteine + 2-oxoglutarate = 2-oxo-3-sulfanylpropanoate + L-glutamate. The enzyme catalyses (2S)-2-aminobutanoate + 2-oxoglutarate = 2-oxobutanoate + L-glutamate. The catalysed reaction is 3-sulfino-L-alanine + 2-oxoglutarate = 3-sulfinopyruvate + L-glutamate. Its function is as follows. Biosynthesis of L-glutamate from L-aspartate or L-cysteine. Important regulator of levels of glutamate, the major excitatory neurotransmitter of the vertebrate central nervous system. Acts as a scavenger of glutamate in brain neuroprotection. The aspartate aminotransferase activity is involved in hepatic glucose synthesis during development and in adipocyte glyceroneogenesis. Using L-cysteine as substrate, regulates levels of mercaptopyruvate, an important source of hydrogen sulfide. Mercaptopyruvate is converted into H(2)S via the action of 3-mercaptopyruvate sulfurtransferase (3MST). Hydrogen sulfide is an important synaptic modulator and neuroprotectant in the brain. This Macaca fascicularis (Crab-eating macaque) protein is Aspartate aminotransferase, cytoplasmic.